A 994-amino-acid chain; its full sequence is Regulator of telomere elongation helicase 1 homolog (994 aa).

The Helicase ATP-binding domain occupies 15 to 300; sequence PKLSVKFPFE…EETARSEADA (286 aa). An ATP-binding site is contributed by 50-57; the sequence is SPTGTGKT. The [4Fe-4S] cluster site is built by Cys142, Cys160, Cys169, and Cys208. Residues 251–254 carry the DEAH box motif; the sequence is DEAH. The tract at residues 876-895 is disordered; the sequence is FKIETPGPSTSTLTQKSEPP. The segment covering 882-892 has biased composition (polar residues); sequence GPSTSTLTQKS.

Belongs to the helicase family. RAD3/XPD subfamily.

The protein resides in the nucleus. It catalyses the reaction ATP + H2O = ADP + phosphate + H(+). Its function is as follows. A probable ATP-dependent DNA helicase implicated in DNA repair and the maintenance of genomic stability. Acts as an anti-recombinase to counteract toxic recombination and limit crossover during meiosis. Regulates meiotic recombination and crossover homeostasis by physically dissociating strand invasion events and thereby promotes noncrossover repair by meiotic synthesis dependent strand annealing (SDSA) as well as disassembly of D loop recombination intermediates. The protein is Regulator of telomere elongation helicase 1 homolog of Caenorhabditis elegans.